The primary structure comprises 405 residues: Tryptophan synthase beta chain (405 aa).

At K98 the chain carries N6-(pyridoxal phosphate)lysine.

The protein belongs to the TrpB family. In terms of assembly, tetramer of two alpha and two beta chains. Pyridoxal 5'-phosphate serves as cofactor.

The catalysed reaction is (1S,2R)-1-C-(indol-3-yl)glycerol 3-phosphate + L-serine = D-glyceraldehyde 3-phosphate + L-tryptophan + H2O. The protein operates within amino-acid biosynthesis; L-tryptophan biosynthesis; L-tryptophan from chorismate: step 5/5. The beta subunit is responsible for the synthesis of L-tryptophan from indole and L-serine. This is Tryptophan synthase beta chain from Stenotrophomonas maltophilia (strain K279a).